Here is a 290-residue protein sequence, read N- to C-terminus: Acetylglutamate kinase (290 aa).

Residues 72–73 (GG), Arg-94, and Asn-187 contribute to the substrate site.

It belongs to the acetylglutamate kinase family. ArgB subfamily.

The protein localises to the plastid. The protein resides in the chloroplast. The enzyme catalyses N-acetyl-L-glutamate + ATP = N-acetyl-L-glutamyl 5-phosphate + ADP. It participates in amino-acid biosynthesis; L-arginine biosynthesis; N(2)-acetyl-L-ornithine from L-glutamate: step 2/4. Functionally, catalyzes the ATP-dependent phosphorylation of N-acetyl-L-glutamate. This is Acetylglutamate kinase from Cyanidioschyzon merolae (strain NIES-3377 / 10D) (Unicellular red alga).